The following is a 296-amino-acid chain: Large ribosomal subunit protein uL15m (296 aa).

The N-terminal 20 residues, 1 to 20, are a transit peptide targeting the mitochondrion; sequence MSLIKKPGGKTIEVVKNLPR. The segment at 25 to 59 is disordered; the sequence is NLRPNPGAKTLEKRRGRGMHGGNRSGWGHKGERQR.

It belongs to the universal ribosomal protein uL15 family. In terms of assembly, component of the mitochondrial ribosome large subunit (39S) which comprises a 16S rRNA and about 50 distinct proteins.

It localises to the mitochondrion. This chain is Large ribosomal subunit protein uL15m (mrpl15), found in Danio rerio (Zebrafish).